Reading from the N-terminus, the 531-residue chain is Polyamine transporter PUT1 (531 aa).

Positions 1 to 76 (MADTGGRPEV…LPDGDAGGPM (76 aa)) are disordered. Over residues 17–33 (SPGHPAASTTAAAAADL) the composition is skewed to low complexity. Residues 34-44 (GHADTGQEKPT) show a composition bias toward basic and acidic residues. A run of 12 helical transmembrane segments spans residues 83–103 (VSMI…PFGI), 113–133 (LLAI…EALI), 147–167 (YVVW…GWMK), 193–213 (LGGG…LTLL), 224–244 (VAIC…LIAL), 262–284 (WNLY…TLAG), 296–316 (ALFY…LAGT), 341–361 (AWLM…MFVA), 391–411 (TPLA…MMSF), 414–434 (IVAA…VAFI), 453–473 (TAGC…VLAL), and 476–496 (LKVA…QPAL).

It belongs to the amino acid-polyamine-organocation (APC) superfamily. Polyamine:cation symporter (PHS) (TC 2.A.3.12) family. In terms of tissue distribution, expressed in seedling roots, leaves, stems, flowers and siliques.

The protein resides in the cell membrane. Its function is as follows. Cell membrane polyamine/proton symporter involved in the polyamine uptake in cells. Possesses high affinity for spermidine and lower affinity for spermine and putrescine. Transports paraquat, a polyamine analog, and thus confers sensitivity to this chemical which is used as a herbicide. The chain is Polyamine transporter PUT1 (PUT1) from Oryza sativa subsp. japonica (Rice).